A 128-amino-acid polypeptide reads, in one-letter code: Large ribosomal subunit protein bL12 (128 aa).

It belongs to the bacterial ribosomal protein bL12 family. Homodimer. Part of the ribosomal stalk of the 50S ribosomal subunit. Forms a multimeric L10(L12)X complex, where L10 forms an elongated spine to which 2 to 4 L12 dimers bind in a sequential fashion. Binds GTP-bound translation factors.

Forms part of the ribosomal stalk which helps the ribosome interact with GTP-bound translation factors. Is thus essential for accurate translation. This chain is Large ribosomal subunit protein bL12, found in Kineococcus radiotolerans (strain ATCC BAA-149 / DSM 14245 / SRS30216).